The sequence spans 207 residues: LexA repressor (207 aa).

Residues 28–48 constitute a DNA-binding region (H-T-H motif); the sequence is RAEISRELGFKSANAAEEHLK. Catalysis depends on for autocatalytic cleavage activity residues Ser-123 and Lys-160.

It belongs to the peptidase S24 family. As to quaternary structure, homodimer.

The enzyme catalyses Hydrolysis of Ala-|-Gly bond in repressor LexA.. Its function is as follows. Represses a number of genes involved in the response to DNA damage (SOS response), including recA and lexA. In the presence of single-stranded DNA, RecA interacts with LexA causing an autocatalytic cleavage which disrupts the DNA-binding part of LexA, leading to derepression of the SOS regulon and eventually DNA repair. In Haemophilus influenzae (strain ATCC 51907 / DSM 11121 / KW20 / Rd), this protein is LexA repressor.